Reading from the N-terminus, the 231-residue chain is Large ribosomal subunit protein uL1 (231 aa).

The protein belongs to the universal ribosomal protein uL1 family. As to quaternary structure, part of the 50S ribosomal subunit.

Its function is as follows. Binds directly to 23S rRNA. The L1 stalk is quite mobile in the ribosome, and is involved in E site tRNA release. Functionally, protein L1 is also a translational repressor protein, it controls the translation of the L11 operon by binding to its mRNA. This chain is Large ribosomal subunit protein uL1, found in Ralstonia pickettii (strain 12J).